We begin with the raw amino-acid sequence, 189 residues long: UPF0301 protein PSPA7_0505 (189 aa).

The protein belongs to the UPF0301 (AlgH) family.

This Pseudomonas paraeruginosa (strain DSM 24068 / PA7) (Pseudomonas aeruginosa (strain PA7)) protein is UPF0301 protein PSPA7_0505.